Consider the following 390-residue polypeptide: MPSDCKYSVDTELVHVEGNEDQYHASSVPIYQSATFKQPCLEHMGKFDYTRSGNPTRSVLQVHLAKLMKAKHAFVTSNGMSALDMILRCCKSNSHVVAGHDLYGGSDRLLSFNQRQYGFKVDNVDTSDLAAFEAALRPDTNLVLIESPTNPRISICDIRAIVKITRSKAKDALLVMDNTMLSPVLCNPLDFGYDIVYESATKYLSGHHDLMGGVIATKSDEIAKSVFFNINAMGAAMAPFECFLLLRGIKTMGLRVERAQQNAIEIAKFLKSKGLQVNFPGLDPDAKSTAIFYSFARGPGAVMSVFTGDVEVSKTIVNTTKLFEISVSFGAVNSLISMPAYMSHASIKKEVRDARGLSEDLIRICVGIENVDDLKADLENALAQANFKQN.

At lysine 202 the chain carries N6-(pyridoxal phosphate)lysine.

The protein belongs to the trans-sulfuration enzymes family. Pyridoxal 5'-phosphate serves as cofactor.

The protein localises to the cytoplasm. It localises to the nucleus. It catalyses the reaction L,L-cystathionine + H2O = L-homocysteine + pyruvate + NH4(+). The enzyme catalyses an S-substituted L-cysteine + H2O = a thiol + pyruvate + NH4(+). It functions in the pathway amino-acid biosynthesis; L-methionine biosynthesis via de novo pathway; L-homocysteine from L-cystathionine: step 1/1. In Schizosaccharomyces pombe (strain 972 / ATCC 24843) (Fission yeast), this protein is Cystathionine beta-lyase (str3).